Reading from the N-terminus, the 161-residue chain is Crossover junction endodeoxyribonuclease RuvC (161 aa).

Active-site residues include D9, E72, and D144. 3 residues coordinate Mg(2+): D9, E72, and D144.

It belongs to the RuvC family. As to quaternary structure, homodimer which binds Holliday junction (HJ) DNA. The HJ becomes 2-fold symmetrical on binding to RuvC with unstacked arms; it has a different conformation from HJ DNA in complex with RuvA. In the full resolvosome a probable DNA-RuvA(4)-RuvB(12)-RuvC(2) complex forms which resolves the HJ. Requires Mg(2+) as cofactor.

It is found in the cytoplasm. It carries out the reaction Endonucleolytic cleavage at a junction such as a reciprocal single-stranded crossover between two homologous DNA duplexes (Holliday junction).. The RuvA-RuvB-RuvC complex processes Holliday junction (HJ) DNA during genetic recombination and DNA repair. Endonuclease that resolves HJ intermediates. Cleaves cruciform DNA by making single-stranded nicks across the HJ at symmetrical positions within the homologous arms, yielding a 5'-phosphate and a 3'-hydroxyl group; requires a central core of homology in the junction. The consensus cleavage sequence is 5'-(A/T)TT(C/G)-3'. Cleavage occurs on the 3'-side of the TT dinucleotide at the point of strand exchange. HJ branch migration catalyzed by RuvA-RuvB allows RuvC to scan DNA until it finds its consensus sequence, where it cleaves and resolves the cruciform DNA. In Synechococcus sp. (strain ATCC 27144 / PCC 6301 / SAUG 1402/1) (Anacystis nidulans), this protein is Crossover junction endodeoxyribonuclease RuvC.